Here is a 312-residue protein sequence, read N- to C-terminus: Ribosomal RNA small subunit methyltransferase H (312 aa).

Residues A32 to H34, D51, F78, D99, and Q106 contribute to the S-adenosyl-L-methionine site.

The protein belongs to the methyltransferase superfamily. RsmH family.

It localises to the cytoplasm. It catalyses the reaction cytidine(1402) in 16S rRNA + S-adenosyl-L-methionine = N(4)-methylcytidine(1402) in 16S rRNA + S-adenosyl-L-homocysteine + H(+). In terms of biological role, specifically methylates the N4 position of cytidine in position 1402 (C1402) of 16S rRNA. The sequence is that of Ribosomal RNA small subunit methyltransferase H from Exiguobacterium sibiricum (strain DSM 17290 / CCUG 55495 / CIP 109462 / JCM 13490 / 255-15).